Consider the following 971-residue polypeptide: Polyamine-modulated factor 1-binding protein 1 (971 aa).

Coiled-coil stretches lie at residues 37-69 (NKQY…LQAS), 117-229 (EKLH…ACSN), 282-325 (LHVE…LREE), 355-680 (QKLS…SAIQ), 706-827 (QDDL…DEKE), and 879-916 (IAKL…KAGT).

Expressed in testis and more specifically in ODF, the sperm tail specific cytoskeletal structure. Also expressed in epididymides and brain.

It localises to the cell projection. The protein localises to the cilium. It is found in the flagellum. Its function is as follows. Required for normal spermatogenesis. It functions as a scaffold protein that attaches the sperm head-tail connecting piece to the nuclear envelope, thus maintaining sperm head and tail integrity. May also be involved in the general organization of cellular cytoskeleton. The protein is Polyamine-modulated factor 1-binding protein 1 (Pmfbp1) of Rattus norvegicus (Rat).